Consider the following 162-residue polypeptide: 2-C-methyl-D-erythritol 2,4-cyclodiphosphate synthase (162 aa).

The a divalent metal cation site is built by Asp-9 and His-11. 4-CDP-2-C-methyl-D-erythritol 2-phosphate contacts are provided by residues 9 to 11 (DVH) and 37 to 38 (HS). His-45 provides a ligand contact to a divalent metal cation.

Belongs to the IspF family. In terms of assembly, homotrimer. A divalent metal cation is required as a cofactor.

The catalysed reaction is 4-CDP-2-C-methyl-D-erythritol 2-phosphate = 2-C-methyl-D-erythritol 2,4-cyclic diphosphate + CMP. The protein operates within isoprenoid biosynthesis; isopentenyl diphosphate biosynthesis via DXP pathway; isopentenyl diphosphate from 1-deoxy-D-xylulose 5-phosphate: step 4/6. Involved in the biosynthesis of isopentenyl diphosphate (IPP) and dimethylallyl diphosphate (DMAPP), two major building blocks of isoprenoid compounds. Catalyzes the conversion of 4-diphosphocytidyl-2-C-methyl-D-erythritol 2-phosphate (CDP-ME2P) to 2-C-methyl-D-erythritol 2,4-cyclodiphosphate (ME-CPP) with a corresponding release of cytidine 5-monophosphate (CMP). This is 2-C-methyl-D-erythritol 2,4-cyclodiphosphate synthase from Petrotoga mobilis (strain DSM 10674 / SJ95).